Consider the following 249-residue polypeptide: General transcription factor IIF subunit 2 (249 aa).

A2 carries the post-translational modification N-acetylalanine. Residues K22, K33, and K137 each carry the N6-acetyllysine modification. S142 bears the Phosphoserine mark. Residues G227 and H229 each contribute to the DNA site. S248 carries the post-translational modification Phosphoserine.

It belongs to the TFIIF beta subunit family. Heterodimer of an alpha and a beta subunit. Interacts with HTATSF1 and GPBP1. Interacts with URI1. Interacts with GTF2B (via N-terminus); this interaction is inhibited in presence of GTF2F1. Part of TBP-based Pol II pre-initiation complex (PIC), in which Pol II core assembles with general transcription factors and other specific initiation factors including GTF2E1, GTF2E2, GTF2F1, GTF2F2, TCEA1, ERCC2, ERCC3, GTF2H2, GTF2H3, GTF2H4, GTF2H5, GTF2A1, GTF2A2, GTF2B and TBP; this large multi-subunit PIC complex mediates DNA unwinding and targets Pol II core to the transcription start site where the first phosphodiester bond forms.

It is found in the nucleus. Functionally, TFIIF is a general transcription initiation factor that binds to RNA polymerase II and helps to recruit it to the initiation complex in collaboration with TFIIB. It promotes transcription elongation. In Rattus norvegicus (Rat), this protein is General transcription factor IIF subunit 2 (Gtf2f2).